The primary structure comprises 424 residues: Homeobox-containing protein 1 (424 aa).

The region spanning 1 to 30 (MLFTIEQLELIKKLQHTGMSSDQLLKAFGE) is the HNF-p1 domain. The region spanning 103-199 (SQRTPMKEIT…PNKLAAFLAD (97 aa)) is the POU-specific atypical domain. The homeobox DNA-binding region spans 215 to 291 (QRRERYVFRP…NKRKELRRRS (77 aa)). The segment at 291–345 (SAEASAASTSSASSSASSTANHDSVSVSSMSPRDEETSSRNTTPETAISPSPAVS) is disordered. A compositionally biased stretch (low complexity) spans 293-310 (EASAASTSSASSSASSTA). Composition is skewed to polar residues over residues 311–321 (NHDSVSVSSMS) and 329–345 (SRNTTPETAISPSPAVS).

Belongs to the HMBOX1 homeobox family. In terms of tissue distribution, expressed in both AWC neurons. Also expressed in the FLP mechanosensory neurons.

It is found in the nucleus. Transcriptional repressor which maintains cell fate asymmetry of AWC neurons in adults by repressing the expression of multiple AWC (OFF) genes, including srsx-3 in the AWC (ON) neuron. This Caenorhabditis elegans protein is Homeobox-containing protein 1.